The primary structure comprises 489 residues: Putative ATP-dependent RNA helicase T26G10.1 (489 aa).

The short motif at 44–72 (KSFAELGVSQPLCDACQRLGWMKPSKIQQ) is the Q motif element. The 172-residue stretch at 75–246 (LPHALQGKDV…RASLRDPARV (172 aa)) folds into the Helicase ATP-binding domain. 88–95 (AETGSGKT) lines the ATP pocket. A DEAD box motif is present at residues 194–197 (DEAD). Residues 257–417 (NLKQHYIFVP…EYKCVENEVM (161 aa)) enclose the Helicase C-terminal domain. Residues 433–489 (EMKEMDEKKKSGKKRRQNDDFGDTEESGGRFKMGIKSMGGRGGSGGGRGGKKKKMSK) are disordered. A compositionally biased stretch (gly residues) spans 469-480 (SMGGRGGSGGGR).

It belongs to the DEAD box helicase family. DDX47/RRP3 subfamily.

Its subcellular location is the nucleus. The enzyme catalyses ATP + H2O = ADP + phosphate + H(+). Its function is as follows. Probable ATP-dependent RNA helicase which may be involved in ribosome biogenesis. In Caenorhabditis elegans, this protein is Putative ATP-dependent RNA helicase T26G10.1.